Here is a 172-residue protein sequence, read N- to C-terminus: Putative phosphoesterase BAMEG_3349 (172 aa).

The Proton donor role is filled by histidine 34. 2 short sequence motifs (HXTX) span residues 34 to 37 (HITL) and 115 to 118 (HLTI). Histidine 115 acts as the Proton acceptor in catalysis.

The protein belongs to the 2H phosphoesterase superfamily. YjcG family.

This Bacillus anthracis (strain CDC 684 / NRRL 3495) protein is Putative phosphoesterase BAMEG_3349.